The primary structure comprises 456 residues: MALIIAGERSGVGKTTTTLTLLAALKARQASVQSFKVGPDYIDPMFHRFVTGRDCRNLDPILTDEDYVQHCFQQHSQTADYTLVEGVMGLFDGLTGKTDTASTAHIARILNLPILLVLNCSSTARSIAAIAYGYQNFDSRLKIAGLVLNRVGSDRHLELLKDALEPLEIPILGVLRRQDEIQIPDRHLGLIPTSELPHLQSVIDRLAVLGQQCFDWNRLEPLLSNSDLNSTAFKSTTPSISLKSSVPIAIARDRAFNFYYADNFDLLRAAGAELIEWSPLQDRQLPAGVQGLYLGGGFPEVFAAELSDNLLARQAVQTAITQGIPCYAECGGLMYLRQHIIDFEQTQYPMVGAIAATAQMGSRLTLGYREATAQQASPLLQKGQVVWGHEFHRSSLREPIAQPLFQLQNFDGSLHYGEGYSQPNLHASYLHLHFGGKPWLIQNFLQACQQATALSR.

A GATase cobBQ-type domain is found at 247 to 439 (PIAIARDRAF…LHLHFGGKPW (193 aa)). Catalysis depends on C330, which acts as the Nucleophile.

Belongs to the CobB/CbiA family. Mg(2+) serves as cofactor.

The catalysed reaction is cob(II)yrinate + 2 L-glutamine + 2 ATP + 2 H2O = cob(II)yrinate a,c diamide + 2 L-glutamate + 2 ADP + 2 phosphate + 2 H(+). It participates in cofactor biosynthesis; adenosylcobalamin biosynthesis; cob(II)yrinate a,c-diamide from sirohydrochlorin (anaerobic route): step 10/10. Functionally, catalyzes the ATP-dependent amidation of the two carboxylate groups at positions a and c of cobyrinate, using either L-glutamine or ammonia as the nitrogen source. In Synechococcus sp. (strain ATCC 27144 / PCC 6301 / SAUG 1402/1) (Anacystis nidulans), this protein is Cobyrinate a,c-diamide synthase.